A 950-amino-acid polypeptide reads, in one-letter code: Serine/threonine-protein kinase atg1 (950 aa).

Residues 6 to 311 (YTRLDEIGRG…FPDFFENGVI (306 aa)) enclose the Protein kinase domain. ATP is bound by residues 12–20 (IGRGSFATV) and Lys35. Asp149 serves as the catalytic Proton acceptor. 5 disordered regions span residues 314 to 425 (PIPG…HATA), 443 to 467 (RQRG…LREE), 505 to 570 (QGGI…QSPT), 671 to 690 (VQTD…NPDS), and 926 to 950 (PTPS…TPPK). 3 stretches are compositionally biased toward polar residues: residues 370 to 389 (GLTQ…PTTT), 447 to 458 (RNTFSEGSPQTD), and 511 to 520 (GAQTGALSRR). Residues 549-565 (SRADSMHNRQSSYERRY) show a composition bias toward basic and acidic residues.

It belongs to the protein kinase superfamily. Ser/Thr protein kinase family. APG1/unc-51/ULK1 subfamily. In terms of assembly, homodimer. Forms a ternary complex with ATG13 and ATG17.

It is found in the cytoplasm. Its subcellular location is the preautophagosomal structure membrane. The catalysed reaction is L-seryl-[protein] + ATP = O-phospho-L-seryl-[protein] + ADP + H(+). It catalyses the reaction L-threonyl-[protein] + ATP = O-phospho-L-threonyl-[protein] + ADP + H(+). In terms of biological role, serine/threonine protein kinase involved in the cytoplasm to vacuole transport (Cvt) and found to be essential in autophagy, where it is required for the formation of autophagosomes. Involved in the clearance of protein aggregates which cannot be efficiently cleared by the proteasome. Required for selective autophagic degradation of the nucleus (nucleophagy) as well as for mitophagy which contributes to regulate mitochondrial quantity and quality by eliminating the mitochondria to a basal level to fulfill cellular energy requirements and preventing excess ROS production. Also involved in endoplasmic reticulum-specific autophagic process, in selective removal of ER-associated degradation (ERAD) substrates. Plays a key role in ATG9 and ATG23 cycling through the pre-autophagosomal structure and is necessary to promote ATG18 binding to ATG9 through phosphorylation of ATG9. Catalyzes phosphorylation of ATG4, decreasing the interaction between ATG4 and ATG8 and impairing deconjugation of PE-conjugated forms of ATG8. This chain is Serine/threonine-protein kinase atg1, found in Neosartorya fischeri (strain ATCC 1020 / DSM 3700 / CBS 544.65 / FGSC A1164 / JCM 1740 / NRRL 181 / WB 181) (Aspergillus fischerianus).